The primary structure comprises 545 residues: Cryptochrome-1 (545 aa).

In terms of domain architecture, Photolyase/cryptochrome alpha/beta spans 3–140; the sequence is INNILWFRHG…RCVENVSHTL (138 aa). FAD is bound by residues Arg237, Ser265, Ser267, Gln308, His375, 407 to 409, Cys413, and Asn416; that span reads DAD.

This sequence belongs to the DNA photolyase class-1 family. In terms of assembly, interacts with tim and per; promoted by light conditions. It depends on FAD as a cofactor.

It is found in the cytoplasm. The protein localises to the perinuclear region. It localises to the nucleus. Its function is as follows. Blue light-dependent regulator that is the input of the circadian feedback loop. Has no photolyase activity for cyclobutane pyrimidine dimers or 6-4 photoproducts. Regulation of expression by light suggests a role in photoreception for locomotor activity rhythms. Functions, together with per, as a transcriptional repressor required for the oscillation of peripheral circadian clocks and for the correct specification of clock cells. Genes directly activated by the transcription factors Clock (Clk) and cycle (cyc) are repressed by cry. This chain is Cryptochrome-1, found in Anopheles gambiae (African malaria mosquito).